Reading from the N-terminus, the 245-residue chain is tRNA pseudouridine synthase A (245 aa).

The active-site Nucleophile is Asp-52. Tyr-111 contacts substrate.

It belongs to the tRNA pseudouridine synthase TruA family. In terms of assembly, homodimer.

The catalysed reaction is uridine(38/39/40) in tRNA = pseudouridine(38/39/40) in tRNA. Formation of pseudouridine at positions 38, 39 and 40 in the anticodon stem and loop of transfer RNAs. This Thermotoga petrophila (strain ATCC BAA-488 / DSM 13995 / JCM 10881 / RKU-1) protein is tRNA pseudouridine synthase A.